The primary structure comprises 163 residues: Protein-export protein SecB (163 aa).

Belongs to the SecB family. Homotetramer, a dimer of dimers. One homotetramer interacts with 1 SecA dimer.

It is found in the cytoplasm. Its function is as follows. One of the proteins required for the normal export of preproteins out of the cell cytoplasm. It is a molecular chaperone that binds to a subset of precursor proteins, maintaining them in a translocation-competent state. It also specifically binds to its receptor SecA. The sequence is that of Protein-export protein SecB from Burkholderia ambifaria (strain MC40-6).